The following is a 144-amino-acid chain: D-aminoacyl-tRNA deacylase (144 aa).

The Gly-cisPro motif, important for rejection of L-amino acids signature appears at Gly-136 to Pro-137.

It belongs to the DTD family. In terms of assembly, homodimer.

The protein localises to the cytoplasm. It catalyses the reaction glycyl-tRNA(Ala) + H2O = tRNA(Ala) + glycine + H(+). The enzyme catalyses a D-aminoacyl-tRNA + H2O = a tRNA + a D-alpha-amino acid + H(+). In terms of biological role, an aminoacyl-tRNA editing enzyme that deacylates mischarged D-aminoacyl-tRNAs. Also deacylates mischarged glycyl-tRNA(Ala), protecting cells against glycine mischarging by AlaRS. Acts via tRNA-based rather than protein-based catalysis; rejects L-amino acids rather than detecting D-amino acids in the active site. By recycling D-aminoacyl-tRNA to D-amino acids and free tRNA molecules, this enzyme counteracts the toxicity associated with the formation of D-aminoacyl-tRNA entities in vivo and helps enforce protein L-homochirality. The protein is D-aminoacyl-tRNA deacylase of Actinobacillus pleuropneumoniae serotype 5b (strain L20).